Here is a 622-residue protein sequence, read N- to C-terminus: FERM domain-containing protein 6 (622 aa).

Residues 16–328 (RSVCIFLPND…NSHRLYMNLQ (313 aa)) enclose the FERM domain. The interval 364-445 (KRSRASGSSA…SGVESGGKDR (82 aa)) is disordered. Composition is skewed to low complexity over residues 384 to 395 (HSTASHSSSHTS) and 425 to 438 (SSMTSHGSSHTSGV). The residue at position 522 (serine 522) is a Phosphoserine. Residue threonine 523 is modified to Phosphothreonine. Serine 525, serine 542, and serine 544 each carry phosphoserine.

The protein resides in the cytoplasm. It is found in the cell membrane. This chain is FERM domain-containing protein 6 (FRMD6), found in Homo sapiens (Human).